The primary structure comprises 319 residues: tRNA-cytidine(32) 2-sulfurtransferase (319 aa).

The short motif at 45–50 (SGGKDS) is the PP-loop motif element. Residues Cys120, Cys123, and Cys211 each coordinate [4Fe-4S] cluster.

It belongs to the TtcA family. Homodimer. Requires Mg(2+) as cofactor. The cofactor is [4Fe-4S] cluster.

It is found in the cytoplasm. The catalysed reaction is cytidine(32) in tRNA + S-sulfanyl-L-cysteinyl-[cysteine desulfurase] + AH2 + ATP = 2-thiocytidine(32) in tRNA + L-cysteinyl-[cysteine desulfurase] + A + AMP + diphosphate + H(+). The protein operates within tRNA modification. Functionally, catalyzes the ATP-dependent 2-thiolation of cytidine in position 32 of tRNA, to form 2-thiocytidine (s(2)C32). The sulfur atoms are provided by the cysteine/cysteine desulfurase (IscS) system. The sequence is that of tRNA-cytidine(32) 2-sulfurtransferase from Shewanella woodyi (strain ATCC 51908 / MS32).